An 886-amino-acid chain; its full sequence is Alanine--tRNA ligase (886 aa).

4 residues coordinate Zn(2+): His564, His568, Cys676, and His680.

This sequence belongs to the class-II aminoacyl-tRNA synthetase family. The cofactor is Zn(2+).

Its subcellular location is the cytoplasm. It carries out the reaction tRNA(Ala) + L-alanine + ATP = L-alanyl-tRNA(Ala) + AMP + diphosphate. In terms of biological role, catalyzes the attachment of alanine to tRNA(Ala) in a two-step reaction: alanine is first activated by ATP to form Ala-AMP and then transferred to the acceptor end of tRNA(Ala). Also edits incorrectly charged Ser-tRNA(Ala) and Gly-tRNA(Ala) via its editing domain. The polypeptide is Alanine--tRNA ligase (Bartonella bacilliformis (strain ATCC 35685 / KC583 / Herrer 020/F12,63)).